The primary structure comprises 286 residues: Release factor glutamine methyltransferase (286 aa).

Residues Asp-148 and Asn-194 each contribute to the S-adenosyl-L-methionine site. 194–197 (NPPY) lines the substrate pocket.

This sequence belongs to the protein N5-glutamine methyltransferase family. PrmC subfamily.

It catalyses the reaction L-glutaminyl-[peptide chain release factor] + S-adenosyl-L-methionine = N(5)-methyl-L-glutaminyl-[peptide chain release factor] + S-adenosyl-L-homocysteine + H(+). Functionally, methylates the class 1 translation termination release factors RF1/PrfA and RF2/PrfB on the glutamine residue of the universally conserved GGQ motif. The polypeptide is Release factor glutamine methyltransferase (Leptospira interrogans serogroup Icterohaemorrhagiae serovar Lai (strain 56601)).